The following is a 149-amino-acid chain: Large ribosomal subunit protein eL24B (149 aa).

A Phosphoserine modification is found at serine 50. Positions 96–149 are disordered; sequence QRPEVRAAARAAALKQRKDKRAASESEKKAIKAKSAASSARGQAIKNAKVAARR. Residues 116–125 show a composition bias toward basic and acidic residues; that stretch reads RAASESEKKA.

The protein belongs to the eukaryotic ribosomal protein eL24 family. Component of the large ribosomal subunit (LSU). Mature yeast ribosomes consist of a small (40S) and a large (60S) subunit. The 40S small subunit contains 1 molecule of ribosomal RNA (18S rRNA) and at least 33 different proteins. The large 60S subunit contains 3 rRNA molecules (25S, 5.8S and 5S rRNA) and at least 46 different proteins.

The protein resides in the cytoplasm. Functionally, component of the ribosome, a large ribonucleoprotein complex responsible for the synthesis of proteins in the cell. The small ribosomal subunit (SSU) binds messenger RNAs (mRNAs) and translates the encoded message by selecting cognate aminoacyl-transfer RNA (tRNA) molecules. The large subunit (LSU) contains the ribosomal catalytic site termed the peptidyl transferase center (PTC), which catalyzes the formation of peptide bonds, thereby polymerizing the amino acids delivered by tRNAs into a polypeptide chain. The nascent polypeptides leave the ribosome through a tunnel in the LSU and interact with protein factors that function in enzymatic processing, targeting, and the membrane insertion of nascent chains at the exit of the ribosomal tunnel. The protein is Large ribosomal subunit protein eL24B (rpl2402) of Schizosaccharomyces pombe (strain 972 / ATCC 24843) (Fission yeast).